A 147-amino-acid chain; its full sequence is UPF0306 protein YhbP (147 aa).

Belongs to the UPF0306 family.

The sequence is that of UPF0306 protein YhbP from Escherichia coli O1:K1 / APEC.